Consider the following 476-residue polypeptide: Glycogen synthase (476 aa).

Residue Lys15 coordinates ADP-alpha-D-glucose.

Belongs to the glycosyltransferase 1 family. Bacterial/plant glycogen synthase subfamily.

It catalyses the reaction [(1-&gt;4)-alpha-D-glucosyl](n) + ADP-alpha-D-glucose = [(1-&gt;4)-alpha-D-glucosyl](n+1) + ADP + H(+). It participates in glycan biosynthesis; glycogen biosynthesis. Synthesizes alpha-1,4-glucan chains using ADP-glucose. The chain is Glycogen synthase from Streptococcus sanguinis (strain SK36).